Reading from the N-terminus, the 147-residue chain is Hemoglobin subunit epsilon (147 aa).

Residues 3 to 147 enclose the Globin domain; sequence HFTAEEKTAI…VASALAHKYH (145 aa). Phosphoserine occurs at positions 14 and 51. Heme b is bound by residues His64 and His93.

Belongs to the globin family. As to expression, red blood cells.

Hemoglobin epsilon chain is an embryonic-type beta-type chain found in prenatal and neonatal marsupials. The protein is Hemoglobin subunit epsilon (HBE1) of Notamacropus eugenii (Tammar wallaby).